A 473-amino-acid polypeptide reads, in one-letter code: Vasculin (473 aa).

3 disordered regions span residues Met-1 to Asn-25, Arg-45 to Ala-169, and Val-191 to Asp-342. Ser-49 bears the Phosphoserine mark. At Arg-87 the chain carries Omega-N-methylarginine. Low complexity predominate over residues Gly-93–Ser-107. The span at Glu-119–Glu-133 shows a compositional bias: basic and acidic residues. Composition is skewed to polar residues over residues Leu-194–Gly-204 and Ala-251–Arg-286. Residues Ser-274, Ser-276, Ser-322, and Ser-381 each carry the phosphoserine modification. Residues Met-293–Phe-329 are compositionally biased toward basic and acidic residues. The segment at Gly-444–Val-473 is disordered. The span at Glu-456–Val-473 shows a compositional bias: acidic residues.

The protein belongs to the vasculin family. As to quaternary structure, interacts with GTF2B, GTF2F2, RNA polymerase II and TBP.

The protein localises to the nucleus. Functions as a GC-rich promoter-specific transactivating transcription factor. This chain is Vasculin (GPBP1), found in Pongo abelii (Sumatran orangutan).